A 135-amino-acid polypeptide reads, in one-letter code: UPF0102 protein RPC_0320 (135 aa).

It belongs to the UPF0102 family.

This chain is UPF0102 protein RPC_0320, found in Rhodopseudomonas palustris (strain BisB18).